A 504-amino-acid polypeptide reads, in one-letter code: Splicing factor SF3a60 homolog (504 aa).

Serine 2 bears the N-acetylserine mark. 2 disordered regions span residues 293 to 319 (DKKH…SENA) and 355 to 374 (YEEM…LESD). Residues 356 to 374 (EEMEGEREGEEANTELESD) show a composition bias toward acidic residues. Serine 373 carries the phosphoserine modification. The Matrin-type zinc finger occupies 409–440 (FKCEICGNYSYWGRRAFERHFKEWRHQHGMRC).

It belongs to the SF3A3 family. Expressed at moderate levels in all sporophytic tissues with strongest expression in gametophytes.

Its subcellular location is the nucleus. Functionally, splicing factor homolog to SF3a60 that may be involved in pre-spliceosome formation. Is necessary for gametic cell fate determination. The sequence is that of Splicing factor SF3a60 homolog from Arabidopsis thaliana (Mouse-ear cress).